A 110-amino-acid polypeptide reads, in one-letter code: MEVAAKLSGARLSAQKARLVADQIRGKGVEDALDILAFSTKKGAQIIKKVLESAIANAEHNEGADVDELKVKTIFVDEGVSLKRIKPRAKGRADRITKRTCHITVKVADK.

It belongs to the universal ribosomal protein uL22 family. In terms of assembly, part of the 50S ribosomal subunit.

In terms of biological role, this protein binds specifically to 23S rRNA; its binding is stimulated by other ribosomal proteins, e.g. L4, L17, and L20. It is important during the early stages of 50S assembly. It makes multiple contacts with different domains of the 23S rRNA in the assembled 50S subunit and ribosome. Its function is as follows. The globular domain of the protein is located near the polypeptide exit tunnel on the outside of the subunit, while an extended beta-hairpin is found that lines the wall of the exit tunnel in the center of the 70S ribosome. The chain is Large ribosomal subunit protein uL22 from Cellvibrio japonicus (strain Ueda107) (Pseudomonas fluorescens subsp. cellulosa).